The chain runs to 136 residues: MAKKTTKRMPKRREEYTYHGYNIEQLKAMSMDELLAIMPSGARRKVLRGFTRDEEDVRAKIAEGDGVRTHSRSMIILPEMVGKNVAIYSGKEFINVEIPVEGVFHYFGEFALTRKKVTHGSAGIGATKSSKYVPLK.

Belongs to the universal ribosomal protein uS19 family.

Its function is as follows. Protein S19 forms a complex with S13 that binds strongly to the 16S ribosomal RNA. The polypeptide is Small ribosomal subunit protein uS19 (Methanocorpusculum labreanum (strain ATCC 43576 / DSM 4855 / Z)).